The following is a 204-amino-acid chain: Oocyte-specific homeobox protein 1 (204 aa).

Residues 28–73 (EPARNLAFQMRQSPLVTPGSTTKSSLSVPERNLLKQESQGPSRQSG) are disordered. 2 stretches are compositionally biased toward polar residues: residues 37 to 54 (MRQSPLVTPGSTTKSSLS) and 62 to 72 (KQESQGPSRQS). A DNA-binding region (homeobox) is located at residues 94 to 153 (FRKERTVYTKEQQGLLQKHFDECQYPNKKKIVELALSVGVTKREIKIWFKNNRAKYRRMN).

Belongs to the paired homeobox family. Obox subfamily. As to expression, specifically expressed in oocytes and early embryos.

The protein resides in the nucleus. Transcription factor required for zygotic genome activation (ZGA), a critical event in early embryonic development during which the developmental control passes from maternally provided mRNAs to the expression of the zygotic genome after fertilization. Together with other Obox family members, required in early two-cell stage embryos to kick-start the major ZGA wave by facilitating RNA Polymerase II 'pre-configuration', during which RNA Polymerase II relocates from the initial one-cell stage binding targets to ZGA gene promoters and distal enhancers. Mechanistically, promotes recruitment of RNA Polymerase II from (CG-rich) non-ZGA genes to (CG-poor) ZGA genes at the two-cell stage. Binds to regulatory DNA sequences containing a 5'-ACNCCTTTAATCCCAG-3' sequence motif. Most maternal and zygotic Obox family proteins can compensate for one another. In addition to its role in ZGA, promotes embryonic stem cell pluripotency. This is Oocyte-specific homeobox protein 1 from Mus musculus (Mouse).